The chain runs to 224 residues: Type II restriction enzyme BstVI (224 aa).

This sequence belongs to the XhoI type II restriction endonuclease family.

The enzyme catalyses Endonucleolytic cleavage of DNA to give specific double-stranded fragments with terminal 5'-phosphates.. Its function is as follows. A P subtype restriction enzyme that recognizes the double-stranded sequence 5'-CTCGAG-3' and cleaves after C-1. This is Type II restriction enzyme BstVI from Geobacillus stearothermophilus (Bacillus stearothermophilus).